The primary structure comprises 159 residues: 2-C-methyl-D-erythritol 2,4-cyclodiphosphate synthase (159 aa).

Residues Asp10 and His12 each coordinate a divalent metal cation. 4-CDP-2-C-methyl-D-erythritol 2-phosphate is bound by residues 10-12 (DVH) and 36-37 (HS). His44 serves as a coordination point for a divalent metal cation. 4-CDP-2-C-methyl-D-erythritol 2-phosphate is bound by residues 58–60 (DIG), 134–137 (TTTE), Phe141, and Arg144.

This sequence belongs to the IspF family. Homotrimer. A divalent metal cation is required as a cofactor.

It catalyses the reaction 4-CDP-2-C-methyl-D-erythritol 2-phosphate = 2-C-methyl-D-erythritol 2,4-cyclic diphosphate + CMP. It functions in the pathway isoprenoid biosynthesis; isopentenyl diphosphate biosynthesis via DXP pathway; isopentenyl diphosphate from 1-deoxy-D-xylulose 5-phosphate: step 4/6. Functionally, involved in the biosynthesis of isopentenyl diphosphate (IPP) and dimethylallyl diphosphate (DMAPP), two major building blocks of isoprenoid compounds. Catalyzes the conversion of 4-diphosphocytidyl-2-C-methyl-D-erythritol 2-phosphate (CDP-ME2P) to 2-C-methyl-D-erythritol 2,4-cyclodiphosphate (ME-CPP) with a corresponding release of cytidine 5-monophosphate (CMP). This Bacteroides fragilis (strain ATCC 25285 / DSM 2151 / CCUG 4856 / JCM 11019 / LMG 10263 / NCTC 9343 / Onslow / VPI 2553 / EN-2) protein is 2-C-methyl-D-erythritol 2,4-cyclodiphosphate synthase.